Reading from the N-terminus, the 228-residue chain is Translin (228 aa).

Residues arginine 86 to histidine 90 form a DNA/RNA binding region. The leucine-zipper stretch occupies residues leucine 177–leucine 198. An N6-acetyllysine modification is found at lysine 187. Position 190 is a phosphoserine (serine 190). Lysine 199 is subject to N6-acetyllysine.

The protein belongs to the translin family. As to quaternary structure, ring-shaped heterooctamer of six TSN and two TSNAX subunits, DNA/RNA binding occurs inside the ring.

The protein localises to the cytoplasm. It is found in the nucleus. Functionally, DNA-binding protein that specifically recognizes consensus sequences at the breakpoint junctions in chromosomal translocations, mostly involving immunoglobulin (Ig)/T-cell receptor gene segments. Seems to recognize single-stranded DNA ends generated by staggered breaks occurring at recombination hot spots. Exhibits both single-stranded and double-stranded endoribonuclease activity. May act as an activator of RNA-induced silencing complex (RISC) by facilitating endonucleolytic cleavage of the siRNA passenger strand. The sequence is that of Translin (Tsn) from Mus musculus (Mouse).